Consider the following 350-residue polypeptide: MKVVNHATKYERLKHFLNALNEPTYRYKQITEAIFKHRIGAFNKMTTLPKALRESLINEFGPSILTVEPVLETTSQQVTKVLLKVAGNNQVEAVRMHYEAGWESFCISSQCGCGLGCTFCSTGAIGLKQNLSADEMTDQLLYFYLKGHSLDSVSFMGMGEALANVRIFDALNVLVDRQLFALSPRRITVSTVGIIPNIQRMTSSFPQMNLTFSLHSPFHDQRSELMPINNKYPLDQVMNVLDQHIHETGRKVYIAYVMLRGVNDSEKHAEALVKRILNNRYPHLYHVNLIRYNPTVGTPENYGQTIEEKLQTFYRVVKSARIPVTIRSQFGREIDAACGQLYGQYQAKKR.

The active-site Proton acceptor is Glu92. Residues 99-333 (EAGWESFCIS…VTIRSQFGRE (235 aa)) enclose the Radical SAM core domain. The cysteines at positions 106 and 338 are disulfide-linked. Residues Cys113, Cys117, and Cys120 each contribute to the [4Fe-4S] cluster site. S-adenosyl-L-methionine is bound by residues 159–160 (GE), Ser190, 213–215 (SLH), and Asn293. The active-site S-methylcysteine intermediate is the Cys338.

Belongs to the radical SAM superfamily. RlmN family. Cfr subfamily. It depends on [4Fe-4S] cluster as a cofactor.

It localises to the cytoplasm. The catalysed reaction is adenosine(2503) in 23S rRNA + 2 reduced [2Fe-2S]-[ferredoxin] + 2 S-adenosyl-L-methionine = 8-methyladenosine(2503) in 23S rRNA + 5'-deoxyadenosine + L-methionine + 2 oxidized [2Fe-2S]-[ferredoxin] + S-adenosyl-L-homocysteine. Functionally, specifically methylates position 8 of adenine 2503 in 23S rRNA. Confers resistance to some classes of antibiotics. This chain is Ribosomal RNA large subunit methyltransferase Cfr, found in Shouchella clausii (strain KSM-K16) (Alkalihalobacillus clausii).